The sequence spans 619 residues: Dihydroxy-acid dehydratase (619 aa).

Aspartate 81 provides a ligand contact to Mg(2+). A [2Fe-2S] cluster-binding site is contributed by cysteine 122. Residues aspartate 123 and lysine 124 each coordinate Mg(2+). An N6-carboxylysine modification is found at lysine 124. Cysteine 198 contributes to the [2Fe-2S] cluster binding site. A Mg(2+)-binding site is contributed by glutamate 494. Serine 520 serves as the catalytic Proton acceptor.

It belongs to the IlvD/Edd family. As to quaternary structure, homodimer. Requires [2Fe-2S] cluster as cofactor. Mg(2+) serves as cofactor.

It catalyses the reaction (2R)-2,3-dihydroxy-3-methylbutanoate = 3-methyl-2-oxobutanoate + H2O. It carries out the reaction (2R,3R)-2,3-dihydroxy-3-methylpentanoate = (S)-3-methyl-2-oxopentanoate + H2O. It functions in the pathway amino-acid biosynthesis; L-isoleucine biosynthesis; L-isoleucine from 2-oxobutanoate: step 3/4. The protein operates within amino-acid biosynthesis; L-valine biosynthesis; L-valine from pyruvate: step 3/4. Its function is as follows. Functions in the biosynthesis of branched-chain amino acids. Catalyzes the dehydration of (2R,3R)-2,3-dihydroxy-3-methylpentanoate (2,3-dihydroxy-3-methylvalerate) into 2-oxo-3-methylpentanoate (2-oxo-3-methylvalerate) and of (2R)-2,3-dihydroxy-3-methylbutanoate (2,3-dihydroxyisovalerate) into 2-oxo-3-methylbutanoate (2-oxoisovalerate), the penultimate precursor to L-isoleucine and L-valine, respectively. This Neisseria gonorrhoeae (strain ATCC 700825 / FA 1090) protein is Dihydroxy-acid dehydratase.